We begin with the raw amino-acid sequence, 191 residues long: MESIILSIAIFIGVLLGTSVGTFSGSGISAGVGASSGSGISAGVGASSGSSTSVGVGTFGGSSTSVGVGTFGGSSTSVGVGTFSGSRTSPDVDAGSGSSTSPDVGAGSGSSISAGVGTFSGSRTSPDVDAGSGSSTSPDVGAGSGSSISAGVGSRIGTGISTTMNARVAVLITAAILSAPVTAIALLEARR.

The first 17 residues, 1–17 (MESIILSIAIFIGVLLG), serve as a signal peptide directing secretion. The segment at 82 to 148 (TFSGSRTSPD…DVGAGSGSSI (67 aa)) is disordered. A helical membrane pass occupies residues 168 to 188 (VAVLITAAILSAPVTAIALLE).

The protein localises to the membrane. This is an uncharacterized protein from Saccharomyces cerevisiae (strain ATCC 204508 / S288c) (Baker's yeast).